Here is a 299-residue protein sequence, read N- to C-terminus: Virginiamycin B lyase (299 aa).

His-229 is a substrate binding site. Residue Glu-269 participates in Mg(2+) binding. The Proton acceptor role is filled by His-271. Glu-286 serves as a coordination point for Mg(2+).

It belongs to the Vgb family. Monomer. It depends on Mg(2+) as a cofactor.

Its function is as follows. Inactivates the type B streptogramin antibiotics by linearizing the lactone ring at the ester linkage, generating a free phenylglycine carboxylate and converting the threonyl moiety into 2-amino-butenoic acid. In Bordetella parapertussis (strain 12822 / ATCC BAA-587 / NCTC 13253), this protein is Virginiamycin B lyase.